We begin with the raw amino-acid sequence, 581 residues long: MTSSDLTQRKGLTMSDSTPDTPRSTPEDAARRLAVLSAQNERLAQVLGEARGKIVELQQQIEEFAKPPGTFAVFLAEHGDGTLDVMSAGRKMHVGASPSVDLTQLRPGQEVSLNEAFVVVAAGGFEPVGEIVTVKELLDDGRALVVGRSDEERVVRLAGSLAGAPLRAGDALTVDTRSGFVYERIPKAEVEDLVLEEVPDIDYGDIGGLGPQIEQIRDAVELPFNHPDLFREHGLRPPKGILLYGPPGCGKTLIAKAVANSLAAAVARRAAAAAEAGGTVDGSPVLVETANQAKSYFLNVKGPELLNKYVGETERHIRLIFSRAREKASQGYPVVVFFDEMESLFRTRGTGLSSDVETTIVPQLLSEIDGVERLDNVIVIGASNREDMIDPAILRPGRLDVKIKIERPDPEGAREIFAKYLTTDLPIHADDLAEHQGDTAAVVDGMIQRVVERMYADTEENQFLEVTYASGDKETLYFKDFNSGAMIQNIVDRAKKSAIKDFLATGQRGIRVEHLVTACVDEFKENEDLPNTTNPDDWARISGKKGERIVFIRTIVQDKNGSGRSAAGRTIETATSTGQYL.

Residues 1-28 (MTSSDLTQRKGLTMSDSTPDTPRSTPED) are disordered. Residues 14–24 (MSDSTPDTPRS) are compositionally biased toward polar residues. Residues 27–66 (EDAARRLAVLSAQNERLAQVLGEARGKIVELQQQIEEFAK) are a coiled coil. Position 248-253 (248-253 (GCGKTL)) interacts with ATP. Residues 561–581 (GSGRSAAGRTIETATSTGQYL) are disordered. Positions 572 to 581 (ETATSTGQYL) are enriched in polar residues. The interval 580-581 (YL) is docks into pockets in the proteasome alpha-ring.

The protein belongs to the AAA ATPase family. As to quaternary structure, homohexamer. Assembles into a hexameric ring structure that caps the 20S proteasome core. Strongly interacts with the prokaryotic ubiquitin-like protein Pup through a hydrophobic interface; the interacting region of ARC lies in its N-terminal coiled-coil domain. There is one Pup binding site per ARC hexamer ring. Upon ATP-binding, the C-terminus of ARC interacts with the alpha-rings of the proteasome core, possibly by binding to the intersubunit pockets.

The protein operates within protein degradation; proteasomal Pup-dependent pathway. ATPase which is responsible for recognizing, binding, unfolding and translocation of pupylated proteins into the bacterial 20S proteasome core particle. May be essential for opening the gate of the 20S proteasome via an interaction with its C-terminus, thereby allowing substrate entry and access to the site of proteolysis. Thus, the C-termini of the proteasomal ATPase may function like a 'key in a lock' to induce gate opening and therefore regulate proteolysis. The protein is Proteasome-associated ATPase of Sanguibacter keddieii (strain ATCC 51767 / DSM 10542 / NCFB 3025 / ST-74).